Reading from the N-terminus, the 352-residue chain is MAQTPAFNKPKVELHVHLDGAIKPETILYFGKKRGIALPADTVEELRNIIGMDKPLSLPGFLAKFDYYMPVIAGCREAIKRIAYEFVEMKAKEGVVYVEVRYSPHLLANSKVDPMPWNQTEGDVTPDDVVDLVNQGLQEGEQAFGIKVRSILCCMRHQPSWSLEVLELCKKYNQKTVVAMDLAGDETIEGSSLFPGHVEAYEGAVKNGIHRTVHAGEVGSPEVVREAVDILKTERVGHGYHTIEDEALYNRLLKENMHFEVCPWSSYLTGAWDPKTTHAVVRFKNDKANYSLNTDDPLIFKSTLDTDYQMTKKDMGFTEEEFKRLNINAAKSSFLPEEEKKELLERLYREYQ.

Position 2 is an N-acetylalanine (Ala-2). 2 residues coordinate Zn(2+): His-15 and His-17. Substrate is bound by residues His-17 and Asp-19. An N6-acetyllysine modification is found at Lys-54. Position 184 (Gly-184) interacts with substrate. Residue His-214 coordinates Zn(2+). Glu-217 serves as the catalytic Proton donor. Lys-232 carries the N6-acetyllysine modification. Asp-295 is a binding site for Zn(2+). Residue Asp-296 participates in substrate binding.

Belongs to the metallo-dependent hydrolases superfamily. Adenosine and AMP deaminases family. In terms of assembly, interacts with DPP4 (via extracellular domain). Interacts with PLG (via Kringle 4 domain); the interaction stimulates PLG activation when in complex with DPP4. Zn(2+) is required as a cofactor. Detected in brain neurons in the median emninence (at protein level). Expressed in secondary deciduum (at protein level). Found in all tissues, occurs in large amounts in T-lymphocytes and, at the time of weaning, in gastrointestinal tissues.

The protein resides in the cell membrane. It is found in the cell junction. It localises to the cytoplasmic vesicle lumen. The protein localises to the cytoplasm. Its subcellular location is the lysosome. It catalyses the reaction adenosine + H2O + H(+) = inosine + NH4(+). It carries out the reaction 2'-deoxyadenosine + H2O + H(+) = 2'-deoxyinosine + NH4(+). The enzyme catalyses cordycepin + H2O + H(+) = 3'-deoxyinosine + NH4(+). Catalyzes the hydrolytic deamination of adenosine and 2-deoxyadenosine. Plays an important role in purine metabolism and in adenosine homeostasis. Modulates signaling by extracellular adenosine, and so contributes indirectly to cellular signaling events. Acts as a positive regulator of T-cell coactivation, by binding DPP4. Its interaction with DPP4 regulates lymphocyte-epithelial cell adhesion. Enhances dendritic cell immunogenicity by affecting dendritic cell costimulatory molecule expression and cytokines and chemokines secretion. Enhances CD4+ T-cell differentiation and proliferation. Acts as a positive modulator of adenosine receptors ADORA1 and ADORA2A, by enhancing their ligand affinity via conformational change. Stimulates plasminogen activation. Plays a role in male fertility. Plays a protective role in early postimplantation embryonic development. Also responsible for the deamination of cordycepin (3'-deoxyadenosine), a fungal natural product that shows antitumor, antibacterial, antifungal, antivirus, and immune regulation properties. The protein is Adenosine deaminase (Ada) of Mus musculus (Mouse).